The primary structure comprises 159 residues: MPLLNLVLDNGSRFVADVEKHSSIALWAPPEGGIEGNYQRRLRGIGYRTQIITAKGLGDISRFLLESHGVRPAHLGKKDKRVFTLPPELAIYMDTLPASAKGFVLWIIEGKVLSLFELESLVGLPAAVPKLKVIVEVGSDYNIRWMPLEQAVSKMAEGR.

This sequence belongs to the complex I NdhN subunit family. In terms of assembly, NDH-1 can be composed of about 15 different subunits; different subcomplexes with different compositions have been identified which probably have different functions.

It localises to the cell inner membrane. It carries out the reaction a plastoquinone + NADH + (n+1) H(+)(in) = a plastoquinol + NAD(+) + n H(+)(out). The catalysed reaction is a plastoquinone + NADPH + (n+1) H(+)(in) = a plastoquinol + NADP(+) + n H(+)(out). In terms of biological role, NDH-1 shuttles electrons from an unknown electron donor, via FMN and iron-sulfur (Fe-S) centers, to quinones in the respiratory and/or the photosynthetic chain. The immediate electron acceptor for the enzyme in this species is believed to be plastoquinone. Couples the redox reaction to proton translocation, and thus conserves the redox energy in a proton gradient. Cyanobacterial NDH-1 also plays a role in inorganic carbon-concentration. In Gloeobacter violaceus (strain ATCC 29082 / PCC 7421), this protein is NAD(P)H-quinone oxidoreductase subunit N.